Here is a 37-residue protein sequence, read N- to C-terminus: Large ribosomal subunit protein bL36c (37 aa).

Belongs to the bacterial ribosomal protein bL36 family.

The protein localises to the plastid. Its subcellular location is the chloroplast. This is Large ribosomal subunit protein bL36c from Cryptomeria japonica (Japanese cedar).